The chain runs to 678 residues: DNA ligase (678 aa).

NAD(+) contacts are provided by residues 36–40 (DSEFD), 85–86 (SL), and E117. The active-site N6-AMP-lysine intermediate is K119. Positions 140, 177, 294, and 318 each coordinate NAD(+). The Zn(2+) site is built by C412, C415, C430, and C436. The BRCT domain occupies 595–678 (IIDAPLLGKT…TWWQHYGNAV (84 aa)).

It belongs to the NAD-dependent DNA ligase family. LigA subfamily. It depends on Mg(2+) as a cofactor. The cofactor is Mn(2+).

The enzyme catalyses NAD(+) + (deoxyribonucleotide)n-3'-hydroxyl + 5'-phospho-(deoxyribonucleotide)m = (deoxyribonucleotide)n+m + AMP + beta-nicotinamide D-nucleotide.. DNA ligase that catalyzes the formation of phosphodiester linkages between 5'-phosphoryl and 3'-hydroxyl groups in double-stranded DNA using NAD as a coenzyme and as the energy source for the reaction. It is essential for DNA replication and repair of damaged DNA. The chain is DNA ligase from Dichelobacter nodosus (strain VCS1703A).